The following is a 34-amino-acid chain: Photosystem I reaction center subunit XII (34 aa).

The helical transmembrane segment at 10–32 (IFIALVVAAHAGVLAVRLCVSLY) threads the bilayer.

This sequence belongs to the PsaM family.

It is found in the cellular thylakoid membrane. The sequence is that of Photosystem I reaction center subunit XII from Synechococcus sp. (strain WH7803).